We begin with the raw amino-acid sequence, 637 residues long: DNA mismatch repair protein MutL (637 aa).

The protein belongs to the DNA mismatch repair MutL/HexB family.

Functionally, this protein is involved in the repair of mismatches in DNA. It is required for dam-dependent methyl-directed DNA mismatch repair. May act as a 'molecular matchmaker', a protein that promotes the formation of a stable complex between two or more DNA-binding proteins in an ATP-dependent manner without itself being part of a final effector complex. This is DNA mismatch repair protein MutL from Actinobacillus succinogenes (strain ATCC 55618 / DSM 22257 / CCUG 43843 / 130Z).